Reading from the N-terminus, the 343-residue chain is Anthranilate phosphoribosyltransferase (343 aa).

5-phospho-alpha-D-ribose 1-diphosphate-binding positions include Gly-84, 87–88, Thr-92, 94–97, 112–120, and Ser-124; these read GD, NIST, and KHGNRSASS. Gly-84 serves as a coordination point for anthranilate. A Mg(2+)-binding site is contributed by Ser-96. Residue Asn-115 coordinates anthranilate. Arg-170 is a binding site for anthranilate. Residues Asp-229 and Glu-230 each contribute to the Mg(2+) site.

Belongs to the anthranilate phosphoribosyltransferase family. As to quaternary structure, homodimer. Mg(2+) is required as a cofactor.

The catalysed reaction is N-(5-phospho-beta-D-ribosyl)anthranilate + diphosphate = 5-phospho-alpha-D-ribose 1-diphosphate + anthranilate. Its pathway is amino-acid biosynthesis; L-tryptophan biosynthesis; L-tryptophan from chorismate: step 2/5. Catalyzes the transfer of the phosphoribosyl group of 5-phosphorylribose-1-pyrophosphate (PRPP) to anthranilate to yield N-(5'-phosphoribosyl)-anthranilate (PRA). The chain is Anthranilate phosphoribosyltransferase from Bordetella avium (strain 197N).